The sequence spans 880 residues: Valine--tRNA ligase (880 aa).

The 'HIGH' region signature appears at 49–59 (PNVTGRLHLGH). The short motif at 525-529 (KMSKS) is the 'KMSKS' region element. Residue lysine 528 participates in ATP binding. Residues 809–879 (LEGLINIDEE…AVQKRMAELK (71 aa)) adopt a coiled-coil conformation.

The protein belongs to the class-I aminoacyl-tRNA synthetase family. ValS type 1 subfamily. In terms of assembly, monomer.

The protein localises to the cytoplasm. The catalysed reaction is tRNA(Val) + L-valine + ATP = L-valyl-tRNA(Val) + AMP + diphosphate. As ValRS can inadvertently accommodate and process structurally similar amino acids such as threonine, to avoid such errors, it has a 'posttransfer' editing activity that hydrolyzes mischarged Thr-tRNA(Val) in a tRNA-dependent manner. Catalyzes the attachment of valine to tRNA(Val). The protein is Valine--tRNA ligase of Bacillus subtilis (strain 168).